The following is a 289-amino-acid chain: Light-independent protochlorophyllide reductase iron-sulfur ATP-binding protein (289 aa).

ATP contacts are provided by residues 10–15 (GIGKST) and K39. Residue S14 coordinates Mg(2+). Residues C95 and C129 each coordinate [4Fe-4S] cluster. ATP is bound at residue 180–181 (NR).

The protein belongs to the NifH/BchL/ChlL family. As to quaternary structure, homodimer. Protochlorophyllide reductase is composed of three subunits; ChlL, ChlN and ChlB. It depends on [4Fe-4S] cluster as a cofactor.

It is found in the plastid. The protein resides in the chloroplast. It carries out the reaction chlorophyllide a + oxidized 2[4Fe-4S]-[ferredoxin] + 2 ADP + 2 phosphate = protochlorophyllide a + reduced 2[4Fe-4S]-[ferredoxin] + 2 ATP + 2 H2O. It functions in the pathway porphyrin-containing compound metabolism; chlorophyll biosynthesis (light-independent). Its function is as follows. Component of the dark-operative protochlorophyllide reductase (DPOR) that uses Mg-ATP and reduced ferredoxin to reduce ring D of protochlorophyllide (Pchlide) to form chlorophyllide a (Chlide). This reaction is light-independent. The L component serves as a unique electron donor to the NB-component of the complex, and binds Mg-ATP. This is Light-independent protochlorophyllide reductase iron-sulfur ATP-binding protein from Marchantia polymorpha (Common liverwort).